The following is a 317-amino-acid chain: 2,3-dihydroxyphenylpropionate/2,3-dihydroxicinnamic acid 1,2-dioxygenase (317 aa).

The Proton donor role is filled by His115. Residue His179 is the Proton acceptor of the active site.

It belongs to the LigB/MhpB extradiol dioxygenase family. As to quaternary structure, homotetramer. The cofactor is Fe(2+).

The catalysed reaction is 3-(2,3-dihydroxyphenyl)propanoate + O2 = (2Z,4E)-2-hydroxy-6-oxonona-2,4-dienedioate + H(+). It carries out the reaction (2E)-3-(2,3-dihydroxyphenyl)prop-2-enoate + O2 = (2Z,4E,7E)-2-hydroxy-6-oxonona-2,4,7-trienedioate + H(+). It participates in aromatic compound metabolism; 3-phenylpropanoate degradation. Catalyzes the non-heme iron(II)-dependent oxidative cleavage of 2,3-dihydroxyphenylpropionic acid and 2,3-dihydroxicinnamic acid into 2-hydroxy-6-ketononadienedioate and 2-hydroxy-6-ketononatrienedioate, respectively. This is 2,3-dihydroxyphenylpropionate/2,3-dihydroxicinnamic acid 1,2-dioxygenase from Photorhabdus laumondii subsp. laumondii (strain DSM 15139 / CIP 105565 / TT01) (Photorhabdus luminescens subsp. laumondii).